We begin with the raw amino-acid sequence, 499 residues long: Lysine--tRNA ligase (499 aa).

Residues E410 and E417 each coordinate Mg(2+).

Belongs to the class-II aminoacyl-tRNA synthetase family. Homodimer. The cofactor is Mg(2+).

Its subcellular location is the cytoplasm. The catalysed reaction is tRNA(Lys) + L-lysine + ATP = L-lysyl-tRNA(Lys) + AMP + diphosphate. The protein is Lysine--tRNA ligase (lysS) of Bacillus subtilis (strain 168).